We begin with the raw amino-acid sequence, 588 residues long: Pescadillo homolog (588 aa).

The required for 28S ribosomal RNA processing stretch occupies residues 1–54; sequence MGGLEKKKYERGSATNYITRNKARKKLQLSLADFRRLCILKGIYPHEPKHKKKV. The interval 1 to 257 is sufficient for nucleolar localization; sequence MGGLEKKKYE…PKLEGQAQAE (257 aa). Lysine 98 carries the N6-acetyllysine modification. Positions 294–314 are disordered; it reads EAEVDEFPTDGEMSAQEEDRR. A sufficient for interaction with MAP1B region spans residues 306–415; the sequence is MSAQEEDRRK…LLLPVAEYFS (110 aa). Positions 322 to 415 constitute a BRCT domain; it reads KHKKLFEGLK…LLLPVAEYFS (94 aa). The segment at 448–515 is disordered; the sequence is GEDPGNLNES…GKKPRVMAGT (68 aa). Residues 456-486 show a composition bias toward acidic residues; it reads ESEEEEEEDDNNEGDGDEEGENEEEEEDAEA. The segment covering 487–508 has biased composition (basic and acidic residues); sequence GSEKEEEARLAALEEQRMEGKK. Lysine 517 participates in a covalent cross-link: Glycyl lysine isopeptide (Lys-Gly) (interchain with G-Cter in SUMO1); alternate. A Glycyl lysine isopeptide (Lys-Gly) (interchain with G-Cter in SUMO2); alternate cross-link involves residue lysine 517. A required for 28S ribosomal RNA processing region spans residues 539–588; sequence MMKKREKYLYQKIMFGKRRKIREANKLAEKRKAHDEAVRSEKKAKKARPE. The interval 565-588 is disordered; sequence LAEKRKAHDEAVRSEKKAKKARPE.

This sequence belongs to the pescadillo family. As to quaternary structure, component of the PeBoW complex, composed of BOP1, PES1 and WDR12. The complex is held together by BOP1, which interacts with PES1 via its N-terminal domain and with WDR12 via a high-affinity interaction between the seven-bladed beta-propeller domains of the 2 proteins. The PeBoW complex associates with the 66S pre-ribosome. The PeBoW complex also associates with DDX27, PES1 interacts directly with DDX27. Interacts with IRS1 and UBTF. May interact with MAP1B. Post-translationally, sumoylated. In terms of tissue distribution, significant levels are detected in a variety of cancer cell lines, including glioblastoma, breast carcinoma, colon carcinoma and cervical carcinoma cells. Levels are abnormally elevated in malignant tumors of astrocytic origin.

The protein resides in the nucleus. It is found in the nucleolus. Its subcellular location is the nucleoplasm. The protein localises to the chromosome. In terms of biological role, component of the PeBoW complex, which is required for maturation of 28S and 5.8S ribosomal RNAs and formation of the 60S ribosome. This is Pescadillo homolog from Homo sapiens (Human).